A 196-amino-acid polypeptide reads, in one-letter code: SPRY domain-containing protein 7 (196 aa).

The B30.2/SPRY domain occupies 1–184 (MAASVFCCLR…FSEFYHTPPP (184 aa)).

This Gallus gallus (Chicken) protein is SPRY domain-containing protein 7 (SPRYD7).